The primary structure comprises 117 residues: Large ribosomal subunit protein bL20 (117 aa).

The protein belongs to the bacterial ribosomal protein bL20 family.

Binds directly to 23S ribosomal RNA and is necessary for the in vitro assembly process of the 50S ribosomal subunit. It is not involved in the protein synthesizing functions of that subunit. In Rickettsia typhi (strain ATCC VR-144 / Wilmington), this protein is Large ribosomal subunit protein bL20.